We begin with the raw amino-acid sequence, 322 residues long: Packaging protein 3 (322 aa).

Residues 1-24 are disordered; it reads MHPILKNIRSQPDQGRAEEHNPEL. Positions 1–127 are interaction with packaging protein 1; the sequence is MHPILKNIRS…RDVERWQHDT (127 aa).

Belongs to the adenoviridae packaging protein 3 family. Part of the genome packaging complex composed of packaging proteins 1, 2 and 3; this complex specifically binds to the packaging sequence on the left end of viral genomic DNA and performs packaging of the viral genome. Interacts with hexon-linking protein IIIa; this interaction is required to promote correct genome packaging. Post-translationally, cleaved at different sites by the viral protease during virion maturation.

The protein localises to the host nucleus. Functionally, involved in viral genome packaging through its interaction with packaging proteins 1 and 2. After proteolytic cleavage by adenovirus protease, L1 52/55k protein is removed from the capsid during viral maturation. The polypeptide is Packaging protein 3 (Pantherophis guttatus (Corn snake)).